The following is a 272-amino-acid chain: Undecaprenyl-diphosphatase (272 aa).

Transmembrane regions (helical) follow at residues 2-22 (LELIKAIFLGIVEGITEWLPI), 50-70 (VIQLGAIMAVVVLYWNKLFPF), 83-103 (FSLWIKVLAATLPAALIGVPF), 110-130 (LFYNYITVAITLIVYGVLFII), 148-168 (LGYKAVLLIGAFQVLALIPGT), 195-215 (LAIPVMFGASLLKLVKFGFAF), 220-240 (LIILLTGMIVAFAVSIFAIKF), and 250-270 (FKAFGYYRIILGLIVVLYFLA).

This sequence belongs to the UppP family.

Its subcellular location is the cell membrane. The catalysed reaction is di-trans,octa-cis-undecaprenyl diphosphate + H2O = di-trans,octa-cis-undecaprenyl phosphate + phosphate + H(+). Functionally, catalyzes the dephosphorylation of undecaprenyl diphosphate (UPP). Confers resistance to bacitracin. In Acetivibrio thermocellus (strain ATCC 27405 / DSM 1237 / JCM 9322 / NBRC 103400 / NCIMB 10682 / NRRL B-4536 / VPI 7372) (Clostridium thermocellum), this protein is Undecaprenyl-diphosphatase.